A 182-amino-acid chain; its full sequence is Cbp/p300-interacting transactivator 4 (182 aa).

Residues 22–129 (GPHAPRTLQP…PPPPPPALGC (108 aa)) form a disordered region. Positions 64-89 (SPVSFQPFPVSQSPGAGSTHLQSAAT) are enriched in polar residues. Positions 100-117 (AAAGGPSPLQPAPGAAAS) are enriched in low complexity.

It belongs to the CITED family. In terms of assembly, interacts via its C-terminal region with the CH1 domain of CREBBP and EP300. Interacts with all TFAP2/AP-2 isoforms. In terms of tissue distribution, strongly expressed in heart, spleen and testis, and weakly in liver and kidney.

Its subcellular location is the nucleus. The protein resides in the cytoplasm. Functionally, acts as a transcriptional coactivator for TFAP2/AP-2. Enhances estrogen-dependent transactivation mediated by estrogen receptors. May function as an inhibitor of transactivation by HIF1A by disrupting HIF1A interaction with CREBBP. May be involved in regulation of gene expression during development and differentiation of blood cells, endothelial cells and mammary epithelial cells. In Mus musculus (Mouse), this protein is Cbp/p300-interacting transactivator 4.